The following is a 138-amino-acid chain: ATP synthase epsilon chain (138 aa).

This sequence belongs to the ATPase epsilon chain family. In terms of assembly, F-type ATPases have 2 components, CF(1) - the catalytic core - and CF(0) - the membrane proton channel. CF(1) has five subunits: alpha(3), beta(3), gamma(1), delta(1), epsilon(1). CF(0) has three main subunits: a, b and c.

It localises to the cell inner membrane. Produces ATP from ADP in the presence of a proton gradient across the membrane. This is ATP synthase epsilon chain from Blochmanniella floridana.